A 118-amino-acid chain; its full sequence is UPF0212 protein HQ_2663A (118 aa).

This sequence belongs to the UPF0212 family.

The sequence is that of UPF0212 protein HQ_2663A from Haloquadratum walsbyi (strain DSM 16790 / HBSQ001).